Reading from the N-terminus, the 1025-residue chain is Glycine dehydrogenase (decarboxylating), mitochondrial (1025 aa).

The N-terminal 35 residues, 1 to 35 (MQLCARAWGLRLGRGAGGGHRLARGTGLSWAQRSR), are a transit peptide targeting the mitochondrion. The tract at residues 16-51 (AGGGHRLARGTGLSWAQRSRDSSGGGGGGGGGDRGA) is disordered. The span at 38-50 (SGGGGGGGGGDRG) shows a compositional bias: gly residues. N6-acetyllysine is present on residues Lys-452, Lys-519, Lys-653, and Lys-669. An N6-(pyridoxal phosphate)lysine modification is found at Lys-759.

The protein belongs to the GcvP family. Interacts with GCSH. Homodimer. The glycine cleavage system is composed of four proteins: P (GLDC), T (GCST), L (DLD) and H (GCSH). Pyridoxal 5'-phosphate serves as cofactor.

The protein localises to the mitochondrion. The catalysed reaction is N(6)-[(R)-lipoyl]-L-lysyl-[glycine-cleavage complex H protein] + glycine + H(+) = N(6)-[(R)-S(8)-aminomethyldihydrolipoyl]-L-lysyl-[glycine-cleavage complex H protein] + CO2. Stimulated by lipoic acid. Inhibited in presence of methylamine. In terms of biological role, the glycine cleavage system catalyzes the degradation of glycine. The P protein (GLDC) binds the alpha-amino group of glycine through its pyridoxal phosphate cofactor; CO(2) is released and the remaining methylamine moiety is then transferred to the lipoamide cofactor of the H protein (GCSH). The sequence is that of Glycine dehydrogenase (decarboxylating), mitochondrial from Mus musculus (Mouse).